The primary structure comprises 161 residues: Nucleotide-binding protein PBPRA2024 (161 aa).

It belongs to the YajQ family.

Its function is as follows. Nucleotide-binding protein. The polypeptide is Nucleotide-binding protein PBPRA2024 (Photobacterium profundum (strain SS9)).